The chain runs to 330 residues: Cyclic AMP receptor-like protein E (330 aa).

Over 1-10 the chain is Extracellular; it reads MLSLSSYVLN. The helical transmembrane segment at 11-31 threads the bilayer; it reads LVGSILCLIGCLFIIGHFFWI. Residues 32–40 are Cytoplasmic-facing; sequence PLLRTSLSR. The chain crosses the membrane as a helical span at residues 41 to 61; sequence IIIYPTFILLLYDMVSFPSFI. Over 62-85 the chain is Extracellular; sequence SKTADLYIERSTIICNFQEAIIQY. The helical transmembrane segment at 86–106 threads the bilayer; that stretch reads LILSNFIWSVCISVNLLYLCF. Topologically, residues 107–116 are cytoplasmic; the sequence is SPNKNLKKNE. Residues 117-137 form a helical membrane-spanning segment; it reads LLYHLCSWGIPLIVVVITKIP. The Extracellular portion of the chain corresponds to 138–156; the sequence is NMISDNGNQCRFKSPNYIK. A helical membrane pass occupies residues 157–177; that stretch reads FYLETILFIAFMLFNFIVAFI. Residues 178–213 are Cytoplasmic-facing; it reads TIKHIISGNLRESETTTTSVLFVNEKKITTKKIVWR. The helical transmembrane segment at 214–234 threads the bilayer; the sequence is LLLYPSILSICYIMTLVLSIY. Over 235-274 the chain is Extracellular; that stretch reads QFSTESYGSGGAYANSINNKRNDKNTESGNSNNNNNSYIE. The N-linked (GlcNAc...) asparagine glycan is linked to Asn-269. The chain crosses the membrane as a helical span at residues 275-295; it reads ILLYISKAIFLLQGFFNALVY. The Cytoplasmic portion of the chain corresponds to 296–330; it reads LRSSKLRDRYKKITIFRKIFWRDEADYQSINDGFN.

This sequence belongs to the G-protein coupled receptor 5 family.

It is found in the membrane. Receptor for cAMP. The protein is Cyclic AMP receptor-like protein E (crlE) of Dictyostelium discoideum (Social amoeba).